A 140-amino-acid polypeptide reads, in one-letter code: DegV domain-containing 15.5 kDa protein (140 aa).

In terms of domain architecture, DegV spans 4-140 (QIIVTDSTSD…ELVLLQSKKI (137 aa)). Residues Thr61 and Ser93 each coordinate hexadecanoate.

Functionally, may bind long-chain fatty acids, such as palmitate, and may play a role in lipid transport or fatty acid metabolism. The sequence is that of DegV domain-containing 15.5 kDa protein from Staphylococcus aureus.